Consider the following 32-residue polypeptide: Zinc metalloproteinase carinactivase-1 catalytic subunit (32 aa).

A Peptidase M12B domain is found at 10-32 (FIKLVIVVDHSMVXKXNNDLIAI).

The protein belongs to the venom metalloproteinase (M12B) family. P-III subfamily. P-IIId sub-subfamily. Heterodimer of a metalloproteinase subunit and a regulatory subunit comprising two disulfide-linked lectins (14 kDa and 17 kDa chains) (AC Q9PRP7 and AC Q9PRP8). The cofactor is Zn(2+). In terms of tissue distribution, expressed by the venom gland.

It localises to the secreted. Functionally, calcium-dependent prothrombin (F2) activator. This protein may activate prothrombin via recognition by the regulatory subunit of the calcium ion bound conformation of its gamma-carboxyglutamic acid (GLA) domain, and the subsequent conversion of prothrombin to active thrombin is catalyzed by the catalytic subunit. This chain is Zinc metalloproteinase carinactivase-1 catalytic subunit, found in Echis carinatus (Saw-scaled viper).